Here is a 270-residue protein sequence, read N- to C-terminus: Putative phosphoenolpyruvate synthase regulatory protein (270 aa).

Residue 150 to 157 participates in ADP binding; it reads GVSRCGKT.

It belongs to the pyruvate, phosphate/water dikinase regulatory protein family. PSRP subfamily.

It carries out the reaction [pyruvate, water dikinase] + ADP = [pyruvate, water dikinase]-phosphate + AMP + H(+). The catalysed reaction is [pyruvate, water dikinase]-phosphate + phosphate + H(+) = [pyruvate, water dikinase] + diphosphate. Its function is as follows. Bifunctional serine/threonine kinase and phosphorylase involved in the regulation of the phosphoenolpyruvate synthase (PEPS) by catalyzing its phosphorylation/dephosphorylation. The chain is Putative phosphoenolpyruvate synthase regulatory protein from Aeromonas hydrophila subsp. hydrophila (strain ATCC 7966 / DSM 30187 / BCRC 13018 / CCUG 14551 / JCM 1027 / KCTC 2358 / NCIMB 9240 / NCTC 8049).